Reading from the N-terminus, the 319-residue chain is Annexin A4 (319 aa).

Ala2 bears the N-acetylalanine mark. The residue at position 7 (Thr7) is a Phosphothreonine. Phosphoserine is present on Ser12. Annexin repeat units lie at residues 14–85 (FNAA…GMMT), 86–157 (PTVL…SLSA), 169–241 (ALMR…AIVK), and 245–316 (NKSA…ILCG). N6-acetyllysine occurs at positions 213, 293, and 300.

The protein belongs to the annexin family. Monomer. Binds to SFTPA1 in a Ca(2+)-dependent manner.

It is found in the zymogen granule membrane. Functionally, may play a role in alveolar type II cells through interaction with the surfactant protein SFTPA1 (SP-A). In Bos taurus (Bovine), this protein is Annexin A4 (ANXA4).